The following is a 63-amino-acid chain: Cecropin-1/3 (63 aa).

An N-terminal signal peptide occupies residues 1–23 (MNFYKVFIFVALILAISLGQSEA). The residue at position 62 (Arg62) is an Arginine amide.

The protein belongs to the cecropin family.

The protein localises to the secreted. Cecropins have lytic and antibacterial activity against several Gram-positive and Gram-negative bacteria. The chain is Cecropin-1/3 (Cec1) from Drosophila virilis (Fruit fly).